The following is a 243-amino-acid chain: High affinity immunoglobulin epsilon receptor subunit beta (243 aa).

The disordered stretch occupies residues 1 to 48; it reads MDTENKSRADLALPNPQESPSAPDIELLEASPPAKALPEKPASPPPQQ. At 1-59 the chain is on the cytoplasmic side; the sequence is MDTENKSRADLALPNPQESPSAPDIELLEASPPAKALPEKPASPPPQQTWQSFLKKELE. The helical transmembrane segment at 60 to 79 threads the bilayer; sequence FLGVTQVLVGLICLCFGTVV. The Extracellular segment spans residues 80–97; that stretch reads CSTLQTSDFDDEVLLLYR. A helical transmembrane segment spans residues 98–117; it reads AGYPFWGAVLFVLSGFLSIM. Residues 118 to 130 are Cytoplasmic-facing; the sequence is SERKNTLYLVRGS. The chain crosses the membrane as a helical span at residues 131–150; the sequence is LGANIVSSIAAGLGIAILIL. Residues 151-179 are Extracellular-facing; the sequence is NLSNNSAYMNYCKDITEDDGCFVTSFITE. A helical membrane pass occupies residues 180–199; sequence LVLMLLFLTILAFCSAVLLI. Over 200–243 the chain is Cytoplasmic; sequence IYRIGQEFERSKVPDDRLYEELHVYSPIYSALEDTREASAPVVS. Residues Tyr-218 and Tyr-224 each carry the phosphotyrosine modification. Position 225 is a phosphoserine (Ser-225). Residue Tyr-228 is modified to Phosphotyrosine.

The protein belongs to the MS4A family. As to quaternary structure, tetramer of an alpha chain, a beta chain, and two disulfide linked gamma chains. Binds LILRB1. Interacts with FES/FPS and LYN. Interacts with FGR. In terms of processing, phosphorylated on tyrosine residues by LYN.

Its subcellular location is the membrane. High affinity receptor that binds to the Fc region of immunoglobulins epsilon. Aggregation of FCER1 by multivalent antigens is required for the full mast cell response, including the release of preformed mediators (such as histamine) by degranulation and de novo production of lipid mediators and cytokines. Also mediates the secretion of important lymphokines. Binding of allergen to receptor-bound IgE leads to cell activation and the release of mediators responsible for the manifestations of allergy. This Rattus norvegicus (Rat) protein is High affinity immunoglobulin epsilon receptor subunit beta (Ms4a2).